Reading from the N-terminus, the 162-residue chain is uncharacterized protein (162 aa).

The helical transmembrane segment at 6-24 threads the bilayer; sequence SYLISIFYIILITSETTAF.

It localises to the membrane. This is an uncharacterized protein from Caenorhabditis elegans.